The sequence spans 130 residues: uncharacterized protein (130 aa).

The segment at 41 to 64 (DDKDDHMDNQPKTSQTSKKVKLSE) is disordered.

This is an uncharacterized protein from Streptococcus pyogenes serotype M6 (strain ATCC BAA-946 / MGAS10394).